Here is a 309-residue protein sequence, read N- to C-terminus: Probable cell division protein kinase ECU11_1290 (309 aa).

The region spanning 4-288 (YENIKQVGEG…VISSHKNTYI (285 aa)) is the Protein kinase domain. ATP is bound by residues 10–18 (VGEGAFGQV) and lysine 33. Aspartate 124 functions as the Proton acceptor in the catalytic mechanism.

This sequence belongs to the protein kinase superfamily. CMGC Ser/Thr protein kinase family. CDC2/CDKX subfamily.

It is found in the nucleus. It catalyses the reaction L-seryl-[protein] + ATP = O-phospho-L-seryl-[protein] + ADP + H(+). It carries out the reaction L-threonyl-[protein] + ATP = O-phospho-L-threonyl-[protein] + ADP + H(+). Its function is as follows. May play a role in the control of the eukaryotic cell cycle. This is Probable cell division protein kinase ECU11_1290 from Encephalitozoon cuniculi (strain GB-M1) (Microsporidian parasite).